We begin with the raw amino-acid sequence, 164 residues long: 17.8 kDa heat shock protein (164 aa).

The 135-residue stretch at 20 to 154 (VVAGEARPPM…HAGNGKAAGD (135 aa)) folds into the sHSP domain. Positions 68-93 (GEHEDANNAAKAGKASGEEEEENDGV) are disordered.

This sequence belongs to the small heat shock protein (HSP20) family. As to quaternary structure, may form oligomeric structures.

The protein localises to the cytoplasm. This is 17.8 kDa heat shock protein (HSP17.8) from Oryza sativa subsp. japonica (Rice).